The following is a 152-amino-acid chain: Lipoprotein signal peptidase (152 aa).

Transmembrane regions (helical) follow at residues 5–25, 61–81, and 84–104; these read LFVL…FWIV, WFFV…LATH, and LNIW…GNFI. Active-site residues include Asp114 and Asp130. A helical membrane pass occupies residues 125–145; the sequence is IFNVADSYLTVGVILLVICLW.

Belongs to the peptidase A8 family.

It localises to the cell membrane. The catalysed reaction is Release of signal peptides from bacterial membrane prolipoproteins. Hydrolyzes -Xaa-Yaa-Zaa-|-(S,diacylglyceryl)Cys-, in which Xaa is hydrophobic (preferably Leu), and Yaa (Ala or Ser) and Zaa (Gly or Ala) have small, neutral side chains.. The protein operates within protein modification; lipoprotein biosynthesis (signal peptide cleavage). Functionally, this protein specifically catalyzes the removal of signal peptides from prolipoproteins. This is Lipoprotein signal peptidase from Streptococcus pyogenes serotype M3 (strain ATCC BAA-595 / MGAS315).